A 528-amino-acid chain; its full sequence is OLD nuclease (528 aa).

The ATPase domain N-terminus stretch occupies residues 1-153; that stretch reads MLKRLQVKNF…LAQHLPSIRG (153 aa). Residue 31-35 participates in ATP binding; the sequence is GAGKT. The dimerization domain stretch occupies residues 154–245; that stretch reads SILGRLLQPV…RESDLTLPGD (92 aa). The ATPase domain C-terminus stretch occupies residues 246 to 369; sequence ELGLGIQSAI…FDTARNEVLF (124 aa). Residues 370-528 are toprim domain; sequence AKRALLVEGY…IRQVTRPMEE (159 aa). A divalent metal cation is bound by residues Glu-377, Asp-381, Asp-431, and Asp-433. The disordered stretch occupies residues 440 to 461; the sequence is RADEETRRKQEQENKAEQEKNQ. The a divalent metal cation site is built by Ser-478 and Glu-480. Arg-487 serves as the catalytic Stabilizes transition state or protonates leaving group.

This sequence belongs to the class 1 OLD nuclease family. In terms of assembly, homodimer. It depends on Mg(2+) as a cofactor. Requires Mn(2+) as cofactor. The cofactor is Ca(2+).

The catalysed reaction is Exonucleolytic cleavage in the 5'- to 3'-direction to yield nucleoside 5'-phosphates.. Functionally, an exodeoxyribonuclease that degrades linear or supercoiled dsDNA from 5'-3'. Nicks and linearizes circular DNA. Activity is not stimulated by ATP or AMP-PNP, although it has DNA-stimulated ATPase activity. The polypeptide is OLD nuclease (Thermus scotoductus (strain ATCC 700910 / SA-01)).